We begin with the raw amino-acid sequence, 65 residues long: Large ribosomal subunit protein bL35 (65 aa).

The segment at methionine 1–glutamine 26 is disordered. Residues alanine 10 to glutamine 26 are compositionally biased toward basic residues.

The protein belongs to the bacterial ribosomal protein bL35 family.

This Haemophilus ducreyi (strain 35000HP / ATCC 700724) protein is Large ribosomal subunit protein bL35.